A 695-amino-acid chain; its full sequence is UvrABC system protein B (695 aa).

The Helicase ATP-binding domain maps to 31 to 414; the sequence is EGIESGLSFQ…EIQRSGQIAE (384 aa). Residue 44 to 51 coordinates ATP; sequence GVTGSGKT. The Beta-hairpin signature appears at 97-120; that stretch reads YYDYYQPEAYVPSRDLFIEKDSSI. In terms of domain architecture, Helicase C-terminal spans 435–601; sequence QVDDLMSEVS…GVNKRIKDLI (167 aa). One can recognise a UVR domain in the interval 632–667; sequence AKEIQRLEKSMLEAARNMEFEQAAQYRDEIKNLRSK.

Belongs to the UvrB family. Forms a heterotetramer with UvrA during the search for lesions. Interacts with UvrC in an incision complex.

The protein resides in the cytoplasm. In terms of biological role, the UvrABC repair system catalyzes the recognition and processing of DNA lesions. A damage recognition complex composed of 2 UvrA and 2 UvrB subunits scans DNA for abnormalities. Upon binding of the UvrA(2)B(2) complex to a putative damaged site, the DNA wraps around one UvrB monomer. DNA wrap is dependent on ATP binding by UvrB and probably causes local melting of the DNA helix, facilitating insertion of UvrB beta-hairpin between the DNA strands. Then UvrB probes one DNA strand for the presence of a lesion. If a lesion is found the UvrA subunits dissociate and the UvrB-DNA preincision complex is formed. This complex is subsequently bound by UvrC and the second UvrB is released. If no lesion is found, the DNA wraps around the other UvrB subunit that will check the other stand for damage. In Nitrosomonas europaea (strain ATCC 19718 / CIP 103999 / KCTC 2705 / NBRC 14298), this protein is UvrABC system protein B.